The sequence spans 1578 residues: FH1/FH2 domain-containing protein 3 (1578 aa).

A GBD/FH3 domain is found at 18 to 405 (NSTNFPEPSR…DLCEKDEEEE (388 aa)). 7 disordered regions span residues 324–518 (HEDG…DKLP), 535–824 (SPLL…GVNG), 915–942 (VGRG…KTES), 979–1013 (LGHR…VPPP), 1418–1462 (QQKQ…YAED), 1490–1514 (RTRS…PSVT), and 1528–1565 (SATQ…PEEA). A phosphoserine mark is found at Ser345 and Ser376. The segment covering 368 to 383 (IQNIKSPLSAPTSPCS) has biased composition (polar residues). The segment covering 399 to 425 (EKDEEEEEEEEQPITEPNSEEEREDDA) has biased composition (acidic residues). Thr413 bears the Phosphothreonine mark. A compositionally biased stretch (low complexity) spans 434 to 446 (ASSASGQSSPGKD). Positions 453–473 (ALHTTSSPTSQGRWLSASTAA) are enriched in polar residues. The segment covering 553-583 (SNFSSNSFQSSRPSPGPSGSPSYASSFSSPQ) has biased composition (low complexity). The span at 584-598 (DTRSSPSGLLTSSFR) shows a compositional bias: polar residues. The stretch at 597-645 (FRQHQESLAAERERRRQEREERLQRIEREERNKFNREYLDKREEQRQAR) forms a coiled coil. Residues 599 to 651 (QHQESLAAERERRRQEREERLQRIEREERNKFNREYLDKREEQRQARGERYKY) are compositionally biased toward basic and acidic residues. 2 stretches are compositionally biased toward low complexity: residues 675–684 (DLSLDLSLPA) and 692–701 (SSQSPSADSQ). The segment covering 751–761 (SQEEPVLELEP) has biased composition (acidic residues). Residues 762–782 (EERASLSEKERQNEEVNERDN) are compositionally biased toward basic and acidic residues. Residues 784–793 (SASSISSSSS) show a composition bias toward low complexity. Basic and acidic residues predominate over residues 795-809 (LEREEKEDKLSEDRA). Ser921 carries the phosphoserine modification. Thr933 carries the post-translational modification Phosphothreonine. The span at 985–1013 (PGPPPPPPPTFLGLPPPPPPPLLDSVPPP) shows a compositional bias: pro residues. The 32-residue stretch at 985–1016 (PGPPPPPPPTFLGLPPPPPPPLLDSVPPPPVP) folds into the FH1 domain. Residues 1039-1435 (GQPAFTKKKK…HRERNKTRGK (397 aa)) form the FH2 domain. The segment covering 1420-1434 (KQKRANHRERNKTRG) has biased composition (basic residues). A compositionally biased stretch (low complexity) spans 1444-1456 (SGSSPAAPSQPQG). In terms of domain architecture, DAD spans 1515-1547 (DDAADEIMDRIVKSATQVPSQRVVPRERKRSRA). Positions 1541 to 1556 (ERKRSRANRKSLRRTL) are enriched in basic residues.

Belongs to the formin homology family. In terms of assembly, interacts with nestin/NES-based interfilament (IF). Interacts with SQSTM1. In terms of tissue distribution, expressed in the heart, including left ventricle, kidney, brain and skeletal muscle, including soleus and tibialis anterior (at protein level).

It is found in the cytoplasm. The protein resides in the cytoskeleton. The protein localises to the myofibril. Its subcellular location is the sarcomere. It localises to the z line. May play a role in actin filament polymerization in cardiomyocytes. Actin-organizing protein that may cause stress fiber formation together with cell elongation. The protein is FH1/FH2 domain-containing protein 3 (Fhod3) of Mus musculus (Mouse).